The chain runs to 141 residues: Large-conductance mechanosensitive channel (141 aa).

A run of 2 helical transmembrane segments spans residues valine 16–methionine 36 and glycine 83–valine 103.

The protein belongs to the MscL family. Homopentamer.

It localises to the cell inner membrane. Functionally, channel that opens in response to stretch forces in the membrane lipid bilayer. May participate in the regulation of osmotic pressure changes within the cell. The protein is Large-conductance mechanosensitive channel of Cytophaga hutchinsonii (strain ATCC 33406 / DSM 1761 / CIP 103989 / NBRC 15051 / NCIMB 9469 / D465).